The following is a 194-amino-acid chain: Fe/S biogenesis protein NfuA (194 aa).

[4Fe-4S] cluster contacts are provided by C152 and C155.

Belongs to the NfuA family. Homodimer. [4Fe-4S] cluster serves as cofactor.

Involved in iron-sulfur cluster biogenesis. Binds a 4Fe-4S cluster, can transfer this cluster to apoproteins, and thereby intervenes in the maturation of Fe/S proteins. Could also act as a scaffold/chaperone for damaged Fe/S proteins. The chain is Fe/S biogenesis protein NfuA from Pseudomonas aeruginosa (strain LESB58).